A 142-amino-acid polypeptide reads, in one-letter code: Secreted acidic protein 1B (142 aa).

Composition is skewed to acidic residues over residues 1–47 (SDDE…DDNE) and 54–64 (TNDDVDYGDGN). The segment at 1–74 (SDDESGDDEN…DEAREIGDHS (74 aa)) is disordered. Residues 1 to 123 (SDDESGDDEN…YLRSGGSHFK (123 aa)) lie on the Extracellular side of the membrane. Residues 65-74 (DEAREIGDHS) are compositionally biased toward basic and acidic residues. A helical transmembrane segment spans residues 124–141 (GQLLNITLGLGFCILFLL). A topological domain (cytoplasmic) is located at residue L142.

Component of the acid-insoluble and acid-soluble organic matrix of the aragonitic skeleton (at protein level).

Its subcellular location is the membrane. The protein is Secreted acidic protein 1B of Acropora millepora (Staghorn coral).